We begin with the raw amino-acid sequence, 327 residues long: Ornithine carbamoyltransferase (327 aa).

Residues 56-59 (STRT), Gln-83, Arg-107, and 134-137 (HPTQ) each bind carbamoyl phosphate. Residues Asn-166, Asp-230, and 234–235 (SM) contribute to the L-ornithine site. Carbamoyl phosphate is bound by residues 269–270 (CL) and Arg-314.

Belongs to the aspartate/ornithine carbamoyltransferase superfamily. OTCase family.

It localises to the cytoplasm. The enzyme catalyses carbamoyl phosphate + L-ornithine = L-citrulline + phosphate + H(+). The protein operates within amino-acid degradation; L-arginine degradation via ADI pathway; carbamoyl phosphate from L-arginine: step 2/2. In terms of biological role, reversibly catalyzes the transfer of the carbamoyl group from carbamoyl phosphate (CP) to the N(epsilon) atom of ornithine (ORN) to produce L-citrulline. This Borreliella burgdorferi (strain ZS7) (Borrelia burgdorferi) protein is Ornithine carbamoyltransferase.